Reading from the N-terminus, the 310-residue chain is MAMFSWTSSEAINGMYIPSALLIFGTAIVKKEWLPYAVALAAILSGGKVFSNRQRKVLNPTEFQNFELKEKTIVSHNVAIYRFALPRPTDILGLPIGQHISLAATIEGQTKEIMRSYTPISSDQEAGYFDLLVKAYPQGNISKHLAGLRIGQTMKVRGPKGAMVYTPNMVKKIGMIAGGTGITPMLQIIKAIIRGRPRNGGNDTTQVDLIFANVNPDDILLKDELDQLAKEDDGFRVFYVLNNPPEGWEGGVGFVTPDMIRAKLPAAAPDTKVLICGPPPMVSAMKKATESLGFKKAGLVSKLEDQVFCF.

The chain crosses the membrane as a helical span at residues 32 to 52; that stretch reads EWLPYAVALAAILSGGKVFSN. One can recognise an FAD-binding FR-type domain in the interval 61–166; that stretch reads TEFQNFELKE…RGPKGAMVYT (106 aa). FAD-binding positions include 146–161 and 172–209; these read AGLR…GPKG and KIGM…QVDL.

Belongs to the flavoprotein pyridine nucleotide cytochrome reductase family. As to quaternary structure, monomer. Component of the 2-(3-amino-3-carboxypropyl)histidine synthase complex composed of DPH1, DPH2, DPH3 and a NADH-dependent reductase, predominantly CBR1. It depends on FAD as a cofactor.

The protein localises to the mitochondrion outer membrane. It catalyses the reaction 2 Fe(III)-[cytochrome b5] + NADH = 2 Fe(II)-[cytochrome b5] + NAD(+) + H(+). The catalysed reaction is 2 Fe(3+)-[Dph3] + NADH = 2 Fe(2+)-[Dph3] + NAD(+) + H(+). Its pathway is protein modification; peptidyl-diphthamide biosynthesis. Functionally, NADH-dependent reductase for DPH3 and cytochrome b5. Required for the first step of diphthamide biosynthesis, a post-translational modification of histidine which occurs in elongation factor 2. DPH1 and DPH2 transfer a 3-amino-3-carboxypropyl (ACP) group from S-adenosyl-L-methionine (SAM) to a histidine residue, the reaction is assisted by a reduction system comprising DPH3 and a NADH-dependent reductase, predominantly CBR1. By reducing DPH3, also involved in the formation of the tRNA wobble base modification mcm5s 2U (5-methoxycarbonylmethyl-2-thiouridine), mediated by the elongator complex. The cytochrome b5/NADH cytochrome b5 reductase electron transfer system supports the catalytic activity of several sterol biosynthetic enzymes. In Ajellomyces capsulatus (strain NAm1 / WU24) (Darling's disease fungus), this protein is NADH-cytochrome b5 reductase 1 (CBR1).